Reading from the N-terminus, the 486-residue chain is Probable glycine dehydrogenase (decarboxylating) subunit 2 (486 aa).

Position 269 is an N6-(pyridoxal phosphate)lysine (K269).

This sequence belongs to the GcvP family. C-terminal subunit subfamily. In terms of assembly, the glycine cleavage system is composed of four proteins: P, T, L and H. In this organism, the P 'protein' is a heterodimer of two subunits. Pyridoxal 5'-phosphate serves as cofactor.

It carries out the reaction N(6)-[(R)-lipoyl]-L-lysyl-[glycine-cleavage complex H protein] + glycine + H(+) = N(6)-[(R)-S(8)-aminomethyldihydrolipoyl]-L-lysyl-[glycine-cleavage complex H protein] + CO2. Functionally, the glycine cleavage system catalyzes the degradation of glycine. The P protein binds the alpha-amino group of glycine through its pyridoxal phosphate cofactor; CO(2) is released and the remaining methylamine moiety is then transferred to the lipoamide cofactor of the H protein. In Chlorobium phaeobacteroides (strain DSM 266 / SMG 266 / 2430), this protein is Probable glycine dehydrogenase (decarboxylating) subunit 2.